Consider the following 338-residue polypeptide: tRNA N6-adenosine threonylcarbamoyltransferase (338 aa).

His-111 and His-115 together coordinate Fe cation. Residues 134–138 (LVSGG), Asp-167, Gly-180, and Asn-272 each bind substrate. Fe cation is bound at residue Asp-300.

It belongs to the KAE1 / TsaD family. Fe(2+) serves as cofactor.

The protein resides in the cytoplasm. The enzyme catalyses L-threonylcarbamoyladenylate + adenosine(37) in tRNA = N(6)-L-threonylcarbamoyladenosine(37) in tRNA + AMP + H(+). In terms of biological role, required for the formation of a threonylcarbamoyl group on adenosine at position 37 (t(6)A37) in tRNAs that read codons beginning with adenine. Is involved in the transfer of the threonylcarbamoyl moiety of threonylcarbamoyl-AMP (TC-AMP) to the N6 group of A37, together with TsaE and TsaB. TsaD likely plays a direct catalytic role in this reaction. This chain is tRNA N6-adenosine threonylcarbamoyltransferase, found in Shewanella putrefaciens (strain CN-32 / ATCC BAA-453).